The sequence spans 904 residues: MNEYRSSLVFATPDLPLRDDVRRLGALVGDLLAEQVSAEFLDEIERVRTTAISRRESDAPPSTLSEQLTGRQPRDAEALVRAFSTYFQVVNIAERVHRIRRRREYQRSGTDTPQPDGLHDALRRLKAQGVTLDELSQWLPRIDVEPVFTAHPTEAVRRALLEKEQLMVASLVDNLDGMRTPNERASDAARFRMALTASWQTADSSPVRPTVDDEREHVGFYLTQVLYRVIPVMYETLEHAIEETYGSVPALPRLLRFGTWVGGDMDGNPNVDAKTIAGTLDAQRRAVLDRYQKELWQLASLLSQSTTLVQVSAELTAQLERYRALLPDAAARSRPRHGDMPYRLLNDLMRARLQATLDDAEGAYSAPSELEHDLQLILDSLQANKGLHAGWFAVRRLLWRVRSFGFHLARLDVRQESSVHARAVADALGQTDWDAQDATQRAAVLGPYAAGQEPLPRVDDEGNARLDAVFAALADARTRHGADALGSYIISMAHNRADVLTVLALARRGGLVDDAGAVPLDIVPLFETVDDLRGGTGTVQDLLADPVYRQHLAARGDTQMVMLGYSDSGKDGGIAASRWGLQRAQVELLEAAAELGVRLTFFHGRGGSIARGGGKTSRALDAAPRGSVDGRLRVTEQGEVIHRKYGIRALALRSLEQMTGAVLLSSLRPRAPEPREAHWRPVMDLVAERSTVAYRAFVGAPEFMQYFRLATPIDVIERMTLGSRPSRRLGQDAALSNLRAIPWVFAWSQARAVIPGWYGVGSGLQAAVDAGHEDTLREMAQDWPFFRTFLDDIAMVLSKGDLNIAELFSRLSGDLHTRFFPLIRDELALTKAWVKALLQQQSLLQHDPRLALSIRLRNPYIDPISVLQVDLLQRWRATDGEDEALLRALVACVNGVSQGVQNTG.

The disordered stretch occupies residues 52–71; it reads ISRRESDAPPSTLSEQLTGR. The span at 60 to 70 shows a compositional bias: polar residues; the sequence is PPSTLSEQLTG. Active-site residues include His-151 and Lys-570.

This sequence belongs to the PEPCase type 1 family. The cofactor is Mg(2+).

The enzyme catalyses oxaloacetate + phosphate = phosphoenolpyruvate + hydrogencarbonate. Functionally, forms oxaloacetate, a four-carbon dicarboxylic acid source for the tricarboxylic acid cycle. The protein is Phosphoenolpyruvate carboxylase of Xanthomonas euvesicatoria pv. vesicatoria (strain 85-10) (Xanthomonas campestris pv. vesicatoria).